Here is a 1026-residue protein sequence, read N- to C-terminus: DNA polymerase catalytic subunit (1026 aa).

Residues 664 to 695 (LKTWLAKRKSIKKELEQCQDAKMKTILDKQQL) adopt a coiled-coil conformation.

It belongs to the DNA polymerase type-B family.

The protein resides in the host nucleus. The enzyme catalyses DNA(n) + a 2'-deoxyribonucleoside 5'-triphosphate = DNA(n+1) + diphosphate. Replicates viral genomic DNA. This Alcelaphine herpesvirus 1 (strain C500) (AlHV-1) protein is DNA polymerase catalytic subunit (9).